The sequence spans 334 residues: RNA polymerase sigma factor RpoS (334 aa).

The disordered stretch occupies residues 21–50; the sequence is PGIMLDESSADEQPSPRATPKATTSFSSKQ. A sigma-70 factor domain-1 region spans residues 61 to 94; it reads DATQLYLNEIGFSPLLTPEEEVHFARLAQKGDPA. A sigma-70 factor domain-2 region spans residues 99–169; the sequence is MIESNLRLVV…ERAIMNQTRT (71 aa). The short motif at 123 to 126 is the Interaction with polymerase core subunit RpoC element; that stretch reads DLIE. The interval 179 to 254 is sigma-70 factor domain-3; that stretch reads ELNVYLRAAR…DDRPTDPCEL (76 aa). The sigma-70 factor domain-4 stretch occupies residues 267–320; sequence WLTELTDKQREVVIRRFGLRGHESSTLEEVGQEIGLTRERVRQIQVEALKRLRE. The H-T-H motif DNA-binding region spans 293 to 312; it reads LEEVGQEIGLTRERVRQIQV.

It belongs to the sigma-70 factor family. RpoS subfamily. As to quaternary structure, interacts with the RNA polymerase core enzyme.

It localises to the cytoplasm. Functionally, sigma factors are initiation factors that promote the attachment of RNA polymerase to specific initiation sites and are then released. This sigma factor is the master transcriptional regulator of the stationary phase and the general stress response. The polypeptide is RNA polymerase sigma factor RpoS (Pseudomonas aeruginosa (strain ATCC 15692 / DSM 22644 / CIP 104116 / JCM 14847 / LMG 12228 / 1C / PRS 101 / PAO1)).